The chain runs to 401 residues: E3 ubiquitin-protein ligase DA2 (401 aa).

The RING-type; degenerate zinc-finger motif lies at Cys-59 to Lys-102. Positions Lys-139–Glu-153 are enriched in basic and acidic residues. The tract at residues Lys-139–Gly-164 is disordered.

In terms of assembly, interacts with DA1 (via C-terminus).

It carries out the reaction S-ubiquitinyl-[E2 ubiquitin-conjugating enzyme]-L-cysteine + [acceptor protein]-L-lysine = [E2 ubiquitin-conjugating enzyme]-L-cysteine + N(6)-ubiquitinyl-[acceptor protein]-L-lysine.. It participates in protein modification; protein ubiquitination. Its function is as follows. E3 ubiquitin-protein ligase involved in the regulation of organ and seed size. Acts synergistically with DA1 to regulate seed size. Functions synergistically with DA1 to restrict cell proliferation in the maternal integuments of ovules and developing seeds. Seems to function independently of BB. Possesses E3 ubiquitin-protein ligase activity in vitro. Polyubiquitinates DA1, DAR1 and DAR2, but not DAR3. The sequence is that of E3 ubiquitin-protein ligase DA2 from Arabidopsis thaliana (Mouse-ear cress).